Here is a 116-residue protein sequence, read N- to C-terminus: Immunoglobulin heavy variable 2-4 (116 aa).

The first 19 residues, 1–19, serve as a signal peptide directing secretion; that stretch reads MAVLVLLFCLVTFPSCVLS. The region spanning 20–116 is the Ig-like domain; it reads QVQLKQSGPG…DDTAIYYCAK (97 aa). C41 and C114 form a disulfide bridge.

The sequence is that of Immunoglobulin heavy variable 2-4 from Mus musculus (Mouse).